The primary structure comprises 1720 residues: 182 kDa tankyrase-1-binding protein (1720 aa).

The interval 1–137 (MKGSTLREGT…PPLTPPARCA (137 aa)) is disordered. The residue at position 14 (Ser-14) is a Phosphoserine. Basic and acidic residues predominate over residues 117-127 (SGKEDAGKEDL). Thr-131 carries the post-translational modification Phosphothreonine. Residues Ser-178 and Ser-220 each carry the phosphoserine modification. 2 disordered regions span residues 185 to 472 (SRLT…ESNW) and 485 to 595 (RPSG…EDQE). The interval 209 to 1563 (EEDSKSPAKG…TEILDSAMYR (1355 aa)) is acidic. Residues 232-243 (QEEHSKTPEERN) show a composition bias toward basic and acidic residues. Position 238 is a phosphothreonine (Thr-238). Positions 266-287 (VSKTWVTSSADPVSEHGGSTSA) are enriched in polar residues. Residues Ser-286 and Ser-300 each carry the phosphoserine modification. The span at 296 to 316 (PASESPRLSSRPSSPCHSQLS) shows a compositional bias: low complexity. Positions 317 to 327 (ETQSPAASEAS) are enriched in polar residues. 2 positions are modified to phosphoserine: Ser-429 and Ser-437. Residues 449 to 459 (TLPQGQGSQSA) show a composition bias toward polar residues. A phosphoserine mark is found at Ser-496 and Ser-500. Low complexity predominate over residues 502 to 518 (ITEASEAAEAAEADSWA). Thr-503 and Thr-533 each carry phosphothreonine. A phosphoserine mark is found at Ser-539, Ser-568, Ser-602, Ser-673, Ser-692, and Ser-713. Disordered regions lie at residues 659–720 (TTLP…CSEG), 734–924 (GVAT…EFEK), and 955–1081 (SGGG…GWAG). Residues 742–758 (SSFGSSSWSQDTSQNYS) show a composition bias toward low complexity. Phosphoserine occurs at positions 763, 796, 807, 845, 866, 871, 876, 887, 912, 976, 980, 1006, 1017, and 1022. Positions 840 to 866 (FGKRESQDPHSIHDKELQDQEFGKRDS) are enriched in basic and acidic residues. The segment covering 991 to 1014 (FEKKTPVGEDRFCEASRDVGHLEE) has biased composition (basic and acidic residues). Positions 1027–1039 (HSRDGAARPKDEG) are enriched in basic and acidic residues. Phosphoserine is present on residues Ser-1047, Ser-1063, Ser-1084, Ser-1096, Ser-1126, Ser-1131, Ser-1171, Ser-1212, Ser-1241, and Ser-1246. The disordered stretch occupies residues 1128–1153 (AGLSPSRKSGGGHFVPPGETKAGAVD). The tract at residues 1198–1255 (LARRLGTGESEEPRSLGVGEKDWTSSVEARNRDLPGQAEVGRHSQARESGVGEPDWSG) is disordered. Residues 1208 to 1230 (EEPRSLGVGEKDWTSSVEARNRD) are compositionally biased toward basic and acidic residues. Thr-1275 carries the post-translational modification Phosphothreonine. Phosphoserine occurs at positions 1290, 1321, 1324, 1373, and 1375. A disordered region spans residues 1358 to 1546 (GRVGPDLELD…RGLLPSCPSE (189 aa)). Residues 1402-1411 (EDSSSPSFET) show a composition bias toward polar residues. Phosphoserine is present on residues Ser-1425, Ser-1429, Ser-1437, Ser-1440, Ser-1442, Ser-1463, and Ser-1466. Positions 1428–1457 (ASPSSCLTRSPPSGSQSLLEGIMTASSSKG) are enriched in polar residues. Residues 1440–1532 (SGSQSLLEGI…QNEQASAPPP (93 aa)) form a tankyrase-binding region. Low complexity predominate over residues 1477-1489 (LAAGAGQGEPQEP). Ser-1496 carries the post-translational modification Phosphoserine. Residues 1515-1527 (WSLTGAARQNEQA) are compositionally biased toward polar residues. The residue at position 1549 (Ser-1549) is a Phosphoserine. Thr-1554 bears the Phosphothreonine mark. The disordered stretch occupies residues 1567–1720 (NLGRKRGHRA…QALKLKKKKI (154 aa)). Residues 1568-1577 (LGRKRGHRAP) show a composition bias toward basic residues. Over residues 1593–1606 (SDTRLFQDSTEPRA) the composition is skewed to basic and acidic residues. Phosphoserine is present on residues Ser-1611, Ser-1612, and Ser-1622. Residues 1620–1626 (PQSRRTR) carry the Nuclear localization signal motif. At Lys-1635 the chain carries N6-methyllysine. 2 positions are modified to phosphoserine: Ser-1643 and Ser-1657. Over residues 1656–1670 (RSAEEGEVTESKSSQ) the composition is skewed to basic and acidic residues. Over residues 1671 to 1690 (KESSVQRSKSCKVPGLGKPL) the composition is skewed to low complexity. The residue at position 1706 (Ser-1706) is a Phosphoserine. A Nuclear localization signal motif is present at residues 1714 to 1719 (KLKKKK).

In terms of assembly, binds to the ANK repeat domain of TNKS1 and TNKS2. ADP-ribosylated by TNKS1.

The protein localises to the nucleus. The protein resides in the cytoplasm. Its subcellular location is the cytoskeleton. It localises to the chromosome. This Mus musculus (Mouse) protein is 182 kDa tankyrase-1-binding protein (Tnks1bp1).